Reading from the N-terminus, the 206-residue chain is MLKTIRKHGITLALFAAGSTGLTAAINQMTKTTIAEQASLQQKALFDQVLPAERYNNALAQSCYLVTAPELGKGEHRVYIAKQDDKPVAAVLEATAPDGYSGAIQLLVGADFNGTVLGTRVTEHHETPGLGDKIELRLSDWITHFAGKKISGADDAHWAVKKDGGNFDQFTGATITPRAVVNAVKRAGLYAQTLPEQLSQLPACGE.

The chain crosses the membrane as a helical span at residues glycine 9–methionine 29. Threonine 174 is subject to FMN phosphoryl threonine.

Belongs to the RnfG family. As to quaternary structure, the complex is composed of six subunits: RsxA, RsxB, RsxC, RsxD, RsxE and RsxG. FMN serves as cofactor.

It localises to the cell inner membrane. Its function is as follows. Part of a membrane-bound complex that couples electron transfer with translocation of ions across the membrane. Required to maintain the reduced state of SoxR. This is Ion-translocating oxidoreductase complex subunit G from Escherichia coli O157:H7.